Here is a 315-residue protein sequence, read N- to C-terminus: MSQPTPAVRTFQDLILALQQYWAEQGCVVLQPYDMEVGAGTFHTATFLRAVGPETWNAAYVQPSRRPTDGRYGENPNRLQHYYQFQVILKPNPDNFQELYLGSLKHIGLDPLVHDVRFVEDNWESPTLGAWGLGWEIWLNGMEVSQFTYFQQVGGIECYPVTGEITYGLERLAMYQQGVDSVYDLVWADGPFGKVTYGDVFHQNEVEQSTYNFEHANVDKLFELFDFYESEAARLIELELPLPGYEMVLKASHTFNLLDARRAISVTARQQYILRVRTLARSVAQAYLQARARLGFPMAPPDLRDEVLAKLEAAQ.

It belongs to the class-II aminoacyl-tRNA synthetase family. As to quaternary structure, tetramer of two alpha and two beta subunits.

The protein localises to the cytoplasm. The catalysed reaction is tRNA(Gly) + glycine + ATP = glycyl-tRNA(Gly) + AMP + diphosphate. In Pseudomonas syringae pv. tomato (strain ATCC BAA-871 / DC3000), this protein is Glycine--tRNA ligase alpha subunit.